The chain runs to 1397 residues: Probable cyclin-dependent serine/threonine-protein kinase DDB_G0292550 (1397 aa).

Residues 4–287 (FQIIELIGSG…TKEALNHPWF (284 aa)) enclose the Protein kinase domain. ATP contacts are provided by residues 10–18 (IGSGSYGKV) and K33. D124 (proton acceptor) is an active-site residue. 8 disordered regions span residues 412 to 567 (NNNN…NNNN), 671 to 728 (PLSI…NNGF), 763 to 831 (NEMG…NGNN), 845 to 949 (NNNN…YANH), 996 to 1101 (NGLA…NTHN), 1115 to 1174 (NNGF…NSPV), 1227 to 1324 (NSAS…SFGL), and 1340 to 1397 (KKKK…IVLD). Low complexity predominate over residues 676 to 715 (SQHHNTSSSDTHNNNNNNYNNNNNNNNNINNNNINSIHNQ). Low complexity-rich tracts occupy residues 845–941 (NNNN…NGNG), 1012–1021 (NSNNNNSGNN), 1028–1101 (NTFN…NTHN), and 1115–1155 (NNGF…TKNN). Residues 1156–1171 (TQFGPNILSSTQTSHN) show a composition bias toward polar residues. Low complexity-rich tracts occupy residues 1253-1321 (NNNN…NNNS) and 1354-1380 (SSSQ…SQTQ).

It belongs to the protein kinase superfamily. CMGC Ser/Thr protein kinase family. CDC2/CDKX subfamily.

The enzyme catalyses L-seryl-[protein] + ATP = O-phospho-L-seryl-[protein] + ADP + H(+). The catalysed reaction is L-threonyl-[protein] + ATP = O-phospho-L-threonyl-[protein] + ADP + H(+). This Dictyostelium discoideum (Social amoeba) protein is Probable cyclin-dependent serine/threonine-protein kinase DDB_G0292550.